The following is a 644-amino-acid chain: Chaperone protein DnaK (644 aa).

Thr200 carries the post-translational modification Phosphothreonine; by autocatalysis. Residues 603–644 (VMAAEQAKSGGAAPGAAPGGAQQAAPDADVVDADFKEVDDKK) form a disordered region. Low complexity predominate over residues 612–630 (GGAAPGAAPGGAQQAAPDA). The span at 635-644 (ADFKEVDDKK) shows a compositional bias: basic and acidic residues.

This sequence belongs to the heat shock protein 70 family.

In terms of biological role, acts as a chaperone. The sequence is that of Chaperone protein DnaK from Polynucleobacter asymbioticus (strain DSM 18221 / CIP 109841 / QLW-P1DMWA-1) (Polynucleobacter necessarius subsp. asymbioticus).